We begin with the raw amino-acid sequence, 588 residues long: uncharacterized protein (588 aa).

Positions 1 to 19 (MRSTAYLTALLSFLGATHA) are cleaved as a signal peptide. N-linked (GlcNAc...) asparagine glycans are attached at residues asparagine 45 and asparagine 104. The region spanning 118–303 (GQGRIPLYSA…TSVTLRTFKD (186 aa)) is the FAD-binding PCMH-type domain. Pros-8alpha-FAD histidine is present on histidine 156. N-linked (GlcNAc...) asparagine glycans are attached at residues asparagine 179, asparagine 312, asparagine 320, asparagine 351, asparagine 370, and asparagine 446.

It belongs to the oxygen-dependent FAD-linked oxidoreductase family. Requires FAD as cofactor.

The protein resides in the secreted. This is an uncharacterized protein from Arthroderma benhamiae (strain ATCC MYA-4681 / CBS 112371) (Trichophyton mentagrophytes).